The sequence spans 1093 residues: ATP-dependent helicase/deoxyribonuclease subunit B (1093 aa).

It belongs to the helicase family. AddB/RexB type 2 subfamily. Heterodimer of AddA and RexB. It depends on Mg(2+) as a cofactor.

Its function is as follows. The heterodimer acts as both an ATP-dependent DNA helicase and an ATP-dependent, dual-direction single-stranded exonuclease. Recognizes the chi site generating a DNA molecule suitable for the initiation of homologous recombination. This subunit has 5' -&gt; 3' nuclease activity but not helicase activity. This is ATP-dependent helicase/deoxyribonuclease subunit B from Streptococcus sanguinis (strain SK36).